Here is a 211-residue protein sequence, read N- to C-terminus: FMN-dependent NADH:quinone oxidoreductase (211 aa).

FMN-binding positions include S10 and 16–18; that span reads STS.

It belongs to the azoreductase type 1 family. Homodimer. FMN serves as cofactor.

It carries out the reaction 2 a quinone + NADH + H(+) = 2 a 1,4-benzosemiquinone + NAD(+). The enzyme catalyses N,N-dimethyl-1,4-phenylenediamine + anthranilate + 2 NAD(+) = 2-(4-dimethylaminophenyl)diazenylbenzoate + 2 NADH + 2 H(+). In terms of biological role, quinone reductase that provides resistance to thiol-specific stress caused by electrophilic quinones. Its function is as follows. Also exhibits azoreductase activity. Catalyzes the reductive cleavage of the azo bond in aromatic azo compounds to the corresponding amines. The chain is FMN-dependent NADH:quinone oxidoreductase from Frankia casuarinae (strain DSM 45818 / CECT 9043 / HFP020203 / CcI3).